The following is a 255-amino-acid chain: tRNA (guanine-N(1)-)-methyltransferase (255 aa).

S-adenosyl-L-methionine is bound by residues glycine 113 and 133 to 138 (IGDYVL).

It belongs to the RNA methyltransferase TrmD family. As to quaternary structure, homodimer.

It localises to the cytoplasm. It carries out the reaction guanosine(37) in tRNA + S-adenosyl-L-methionine = N(1)-methylguanosine(37) in tRNA + S-adenosyl-L-homocysteine + H(+). Functionally, specifically methylates guanosine-37 in various tRNAs. This chain is tRNA (guanine-N(1)-)-methyltransferase, found in Salmonella choleraesuis (strain SC-B67).